A 239-amino-acid polypeptide reads, in one-letter code: Ribonuclease PH (239 aa).

Phosphate-binding positions include R86 and 124–126; that span reads GTR.

It belongs to the RNase PH family. In terms of assembly, homohexameric ring arranged as a trimer of dimers.

It catalyses the reaction tRNA(n+1) + phosphate = tRNA(n) + a ribonucleoside 5'-diphosphate. Phosphorolytic 3'-5' exoribonuclease that plays an important role in tRNA 3'-end maturation. Removes nucleotide residues following the 3'-CCA terminus of tRNAs; can also add nucleotides to the ends of RNA molecules by using nucleoside diphosphates as substrates, but this may not be physiologically important. Probably plays a role in initiation of 16S rRNA degradation (leading to ribosome degradation) during starvation. This is Ribonuclease PH from Rickettsia africae (strain ESF-5).